A 424-amino-acid chain; its full sequence is uncharacterized protein (424 aa).

Belongs to the serpin family.

This is an uncharacterized protein from Methanosarcina acetivorans (strain ATCC 35395 / DSM 2834 / JCM 12185 / C2A).